Here is a 98-residue protein sequence, read N- to C-terminus: NADH-ubiquinone oxidoreductase chain 4L (98 aa).

3 helical membrane-spanning segments follow: residues 1–21 (MSLTYMNMFLAFTISLVGLLM), 29–49 (ALLCLEGMMLSLFVMMTITIL), and 61–81 (IILLVFAACEAALGLSLLVMV).

The protein belongs to the complex I subunit 4L family. In terms of assembly, core subunit of respiratory chain NADH dehydrogenase (Complex I) which is composed of 45 different subunits.

It localises to the mitochondrion inner membrane. The catalysed reaction is a ubiquinone + NADH + 5 H(+)(in) = a ubiquinol + NAD(+) + 4 H(+)(out). Its function is as follows. Core subunit of the mitochondrial membrane respiratory chain NADH dehydrogenase (Complex I) which catalyzes electron transfer from NADH through the respiratory chain, using ubiquinone as an electron acceptor. Part of the enzyme membrane arm which is embedded in the lipid bilayer and involved in proton translocation. The protein is NADH-ubiquinone oxidoreductase chain 4L (MT-ND4L) of Rhinophylla pumilio (Dwarf little fruit bat).